The sequence spans 152 residues: Transcriptional repressor NrdR (152 aa).

Residues 3–34 (CPYCQHPDSDVIDTRKLHNGETIRRRRKCEAC) fold into a zinc finger. The 91-residue stretch at 49–139 (ITVVKKNGER…VYRSFADIGK (91 aa)) folds into the ATP-cone domain.

This sequence belongs to the NrdR family. Zn(2+) is required as a cofactor.

Its function is as follows. Negatively regulates transcription of bacterial ribonucleotide reductase nrd genes and operons by binding to NrdR-boxes. The protein is Transcriptional repressor NrdR of Roseiflexus castenholzii (strain DSM 13941 / HLO8).